Here is a 311-residue protein sequence, read N- to C-terminus: Haloalkane dehalogenase (311 aa).

In terms of domain architecture, AB hydrolase-1 spans 30 to 148 (AIVFQHGNPS…WDDFPDEVAQ (119 aa)). Asp-107 functions as the Nucleophile in the catalytic mechanism. Residue Glu-131 is the Proton donor of the active site. The active-site Proton acceptor is the His-272.

Belongs to the haloalkane dehalogenase family. Type 2 subfamily. In terms of assembly, monomer.

It carries out the reaction 1-haloalkane + H2O = a halide anion + a primary alcohol + H(+). Catalyzes hydrolytic cleavage of carbon-halogen bonds in halogenated aliphatic compounds, leading to the formation of the corresponding primary alcohols, halide ions and protons. This is Haloalkane dehalogenase from Mycolicibacterium smegmatis (strain ATCC 700084 / mc(2)155) (Mycobacterium smegmatis).